Reading from the N-terminus, the 114-residue chain is uncharacterized protein (114 aa).

A compositionally biased stretch (basic residues) spans 18–29; the sequence is TRKRNSHKKVTK. Disordered regions lie at residues 18-47 and 65-108; these read TRKR…RRTG and SRPR…KLLN. The span at 30–41 shows a compositional bias: basic and acidic residues; the sequence is RAVEKRKQDSTR.

This is an uncharacterized protein from Homo sapiens (Human).